A 259-amino-acid chain; its full sequence is 5'-nucleotidase SurE (259 aa).

Asp8, Asp9, Ser40, and Asn92 together coordinate a divalent metal cation.

The protein belongs to the SurE nucleotidase family. It depends on a divalent metal cation as a cofactor.

Its subcellular location is the cytoplasm. The catalysed reaction is a ribonucleoside 5'-phosphate + H2O = a ribonucleoside + phosphate. Nucleotidase that shows phosphatase activity on nucleoside 5'-monophosphates. The chain is 5'-nucleotidase SurE from Stenotrophomonas maltophilia (strain K279a).